The chain runs to 147 residues: Calcium-regulated heat-stable protein 1 (147 aa).

A compositionally biased stretch (pro residues) spans Met1–Pro12. The segment at Met1–Ser52 is disordered. The residue at position 2 (Ser2) is an N-acetylserine. A phosphoserine mark is found at Ser30, Ser32, and Ser41. Thr45 carries the phosphothreonine modification. Residues Ser52 and Ser58 each carry the phosphoserine modification. Residues Val62–Thr129 enclose the CSD domain. Ser146 and Ser147 each carry phosphoserine.

In terms of assembly, homodimer. Interacts with STYX. Dephosphorylated by calcineurin in a Ca(2+) dependent manner. Can be phosphorylated by DYRK2 (in vitro).

It is found in the cytoplasm. The protein localises to the P-body. The protein resides in the cytoplasmic granule. Functionally, binds mRNA and regulates the stability of target mRNA. Binds single-stranded DNA (in vitro). The protein is Calcium-regulated heat-stable protein 1 (CARHSP1) of Homo sapiens (Human).